The chain runs to 342 residues: tRNA-specific 2-thiouridylase MnmA (342 aa).

ATP contacts are provided by residues 6–13 (LLSGGVDS) and L32. The active-site Nucleophile is C92. C92 and C191 are disulfide-bonded. G116 serves as a coordination point for ATP. An interaction with tRNA region spans residues 138–140 (KDQ). The active-site Cysteine persulfide intermediate is the C191. Positions 293–294 (RY) are interaction with tRNA.

This sequence belongs to the MnmA/TRMU family.

The protein resides in the cytoplasm. The enzyme catalyses S-sulfanyl-L-cysteinyl-[protein] + uridine(34) in tRNA + AH2 + ATP = 2-thiouridine(34) in tRNA + L-cysteinyl-[protein] + A + AMP + diphosphate + H(+). Its function is as follows. Catalyzes the 2-thiolation of uridine at the wobble position (U34) of tRNA, leading to the formation of s(2)U34. This is tRNA-specific 2-thiouridylase MnmA from Helicobacter pylori (strain G27).